Here is a 417-residue protein sequence, read N- to C-terminus: Gamma-glutamyl phosphate reductase (417 aa).

The protein belongs to the gamma-glutamyl phosphate reductase family.

It localises to the cytoplasm. It catalyses the reaction L-glutamate 5-semialdehyde + phosphate + NADP(+) = L-glutamyl 5-phosphate + NADPH + H(+). It functions in the pathway amino-acid biosynthesis; L-proline biosynthesis; L-glutamate 5-semialdehyde from L-glutamate: step 2/2. In terms of biological role, catalyzes the NADPH-dependent reduction of L-glutamate 5-phosphate into L-glutamate 5-semialdehyde and phosphate. The product spontaneously undergoes cyclization to form 1-pyrroline-5-carboxylate. This is Gamma-glutamyl phosphate reductase from Polynucleobacter asymbioticus (strain DSM 18221 / CIP 109841 / QLW-P1DMWA-1) (Polynucleobacter necessarius subsp. asymbioticus).